Reading from the N-terminus, the 309-residue chain is MKIVFMGTPEFAVPSLKAMVENFNVEGVFTQPDRPKGRGKKLAMSPVKEVALENNIDVYQPVSLRKEPEFIEKLKNIQPDFIIVVAYGQILPKEVLEIPKYACINLHASLLPKYRGAAPLNWAIINGEKKSGNTTMLMDVGLDTGDMLMTQEVDINDSMTAGELHDILMIQGGDLLVDTINKMVSGEITPIKQDDSKTCYASMLDKKMACIDWSKSASEIHNLIRGLNPWPVAYTHYDDKVMKIYKSHVLNENSKKEPGTVINVSNKGIKVACGEGILVVEEIQFPGKKPLKVEQYIRGNSIEIESVLK.

109-112 (SLLP) is a (6S)-5,6,7,8-tetrahydrofolate binding site.

This sequence belongs to the Fmt family.

The enzyme catalyses L-methionyl-tRNA(fMet) + (6R)-10-formyltetrahydrofolate = N-formyl-L-methionyl-tRNA(fMet) + (6S)-5,6,7,8-tetrahydrofolate + H(+). Attaches a formyl group to the free amino group of methionyl-tRNA(fMet). The formyl group appears to play a dual role in the initiator identity of N-formylmethionyl-tRNA by promoting its recognition by IF2 and preventing the misappropriation of this tRNA by the elongation apparatus. The chain is Methionyl-tRNA formyltransferase from Clostridium novyi (strain NT).